A 364-amino-acid polypeptide reads, in one-letter code: Phosphate acyltransferase (364 aa).

The interval 343–364 (IRTSGRSGGKSKSSAAREDGAA) is disordered.

It belongs to the PlsX family. Homodimer. Probably interacts with PlsY.

It localises to the cytoplasm. The enzyme catalyses a fatty acyl-[ACP] + phosphate = an acyl phosphate + holo-[ACP]. Its pathway is lipid metabolism; phospholipid metabolism. Catalyzes the reversible formation of acyl-phosphate (acyl-PO(4)) from acyl-[acyl-carrier-protein] (acyl-ACP). This enzyme utilizes acyl-ACP as fatty acyl donor, but not acyl-CoA. In Novosphingobium aromaticivorans (strain ATCC 700278 / DSM 12444 / CCUG 56034 / CIP 105152 / NBRC 16084 / F199), this protein is Phosphate acyltransferase.